We begin with the raw amino-acid sequence, 520 residues long: Ribonuclease Y (520 aa).

Residues 1–3 (MTP) are Extracellular-facing. Residues 4 to 24 (IMMVLISILLILLGLVVGYFV) form a helical membrane-spanning segment. Residues 25 to 520 (RKTIAEAKIA…RETRAVEYAK (496 aa)) lie on the Cytoplasmic side of the membrane. Residues 29–141 (AEAKIAGARG…KVDEMIRMQQ (113 aa)) are a coiled coil. The region spanning 210–273 (TVSVVNLPND…ETARIALDKL (64 aa)) is the KH domain. In terms of domain architecture, HD spans 336–429 (VLKHSMEVAF…VAAADALSAA (94 aa)).

It belongs to the RNase Y family. As to quaternary structure, homodimer. Component of a possible RNA degradosome complex composed of rny, rnjA, rnjB, pnp, pfkA and eno (although rnjA and rnjB's presence is unclear). Interacts with RNA helicase CshA which may also be a member of the RNA degradosome complex. Interacts with full-length dynamin-like protein DynA. Mg(2+) serves as cofactor. The cofactor is Mn(2+). It depends on Zn(2+) as a cofactor.

The protein resides in the cell membrane. With respect to regulation, shows preference for transcripts carrying a monophosphate group at the 5' end. Endoribonuclease that initiates mRNA decay. Initiates the decay of all SAM-dependent riboswitches, such as yitJ riboswitch. Involved in processing of the gapA operon mRNA, it cleaves between cggR and gapA. Is also the decay-initiating endonuclease for rpsO mRNA. Involved in degradation of type I toxin-antitoxin system bsrG/SR4 RNAs and a minor role in degradation of type I toxin-antitoxin system bsrE/SR5 degradation. This Bacillus subtilis (strain 168) protein is Ribonuclease Y (rny).